We begin with the raw amino-acid sequence, 243 residues long: Methylthioribulose-1-phosphate dehydratase (243 aa).

A substrate-binding site is contributed by C90. Zn(2+) is bound by residues H108 and H110. E131 functions as the Proton donor/acceptor in the catalytic mechanism. Residue H193 participates in Zn(2+) binding.

The protein belongs to the aldolase class II family. MtnB subfamily. It depends on Zn(2+) as a cofactor.

The protein localises to the cytoplasm. It catalyses the reaction 5-(methylsulfanyl)-D-ribulose 1-phosphate = 5-methylsulfanyl-2,3-dioxopentyl phosphate + H2O. It participates in amino-acid biosynthesis; L-methionine biosynthesis via salvage pathway; L-methionine from S-methyl-5-thio-alpha-D-ribose 1-phosphate: step 2/6. Functionally, catalyzes the dehydration of methylthioribulose-1-phosphate (MTRu-1-P) into 2,3-diketo-5-methylthiopentyl-1-phosphate (DK-MTP-1-P). The polypeptide is Methylthioribulose-1-phosphate dehydratase (Zygosaccharomyces rouxii (strain ATCC 2623 / CBS 732 / NBRC 1130 / NCYC 568 / NRRL Y-229)).